The following is a 513-amino-acid chain: Putative ribose/galactose/methyl galactoside import ATP-binding protein 2 (513 aa).

ABC transporter domains are found at residues 24 to 260 (LTAE…VGRE) and 270 to 510 (VPIG…VMEL). 56-63 (GENGAGKS) contacts ATP.

It belongs to the ABC transporter superfamily. Carbohydrate importer 2 (CUT2) (TC 3.A.1.2) family.

It is found in the cell inner membrane. It carries out the reaction D-ribose(out) + ATP + H2O = D-ribose(in) + ADP + phosphate + H(+). The enzyme catalyses D-galactose(out) + ATP + H2O = D-galactose(in) + ADP + phosphate + H(+). Its function is as follows. Part of an ABC transporter complex involved in carbohydrate import. Could be involved in ribose, galactose and/or methyl galactoside import. Responsible for energy coupling to the transport system. The sequence is that of Putative ribose/galactose/methyl galactoside import ATP-binding protein 2 from Rhizobium meliloti (strain 1021) (Ensifer meliloti).